The chain runs to 830 residues: Lon protease (830 aa).

The disordered stretch occupies residues 1 to 28 (MTFDTNDDSIAKNSLAPYNQETEQQQEE). The 196-residue stretch at 50-245 (IPILPLRDVV…LVITHLTHEA (196 aa)) folds into the Lon N-terminal domain. 397 to 404 (GPPGVGKT) provides a ligand contact to ATP. Residues 633 to 814 (TLPPGVALGL…DEVLPLAFSE (182 aa)) enclose the Lon proteolytic domain. Catalysis depends on residues Ser-720 and Lys-763.

It belongs to the peptidase S16 family. In terms of assembly, homohexamer. Organized in a ring with a central cavity.

The protein resides in the cytoplasm. It catalyses the reaction Hydrolysis of proteins in presence of ATP.. In terms of biological role, ATP-dependent serine protease that mediates the selective degradation of mutant and abnormal proteins as well as certain short-lived regulatory proteins. Required for cellular homeostasis and for survival from DNA damage and developmental changes induced by stress. Degrades polypeptides processively to yield small peptide fragments that are 5 to 10 amino acids long. Binds to DNA in a double-stranded, site-specific manner. This is Lon protease from Lawsonia intracellularis (strain PHE/MN1-00).